Reading from the N-terminus, the 245-residue chain is 1-(5-phosphoribosyl)-5-[(5-phosphoribosylamino)methylideneamino] imidazole-4-carboxamide isomerase (245 aa).

Aspartate 8 (proton acceptor) is an active-site residue. Aspartate 130 (proton donor) is an active-site residue.

This sequence belongs to the HisA/HisF family.

The protein localises to the cytoplasm. The catalysed reaction is 1-(5-phospho-beta-D-ribosyl)-5-[(5-phospho-beta-D-ribosylamino)methylideneamino]imidazole-4-carboxamide = 5-[(5-phospho-1-deoxy-D-ribulos-1-ylimino)methylamino]-1-(5-phospho-beta-D-ribosyl)imidazole-4-carboxamide. It functions in the pathway amino-acid biosynthesis; L-histidine biosynthesis; L-histidine from 5-phospho-alpha-D-ribose 1-diphosphate: step 4/9. This is 1-(5-phosphoribosyl)-5-[(5-phosphoribosylamino)methylideneamino] imidazole-4-carboxamide isomerase from Pseudomonas fluorescens (strain Pf0-1).